The primary structure comprises 141 residues: Large ribosomal subunit protein uL14 (141 aa).

This sequence belongs to the universal ribosomal protein uL14 family. Part of the 50S ribosomal subunit. Forms a cluster with proteins L3 and L24e, part of which may contact the 16S rRNA in 2 intersubunit bridges.

In terms of biological role, binds to 23S rRNA. Forms part of two intersubunit bridges in the 70S ribosome. The protein is Large ribosomal subunit protein uL14 of Thermofilum pendens (strain DSM 2475 / Hrk 5).